Here is a 485-residue protein sequence, read N- to C-terminus: MGMLDVSLHKITQKSQSLLHRTADRHLRLAVTGLSGAGKTAFITGLVNQLLNSGAVSTVSHSRQNGLPLWQVSREQRLLGVKRAMQPDLEIASFDYQGAMLALTSNPPTWPESTRTISELRLAIKYRPEKGLLAKFADAATLYLDIVDYPGEWLLDLPMLRQSYIEWCTTQQQRIAVLKSSPLYAGFETSLNALNLAAMADESELKRLADQYQQLLHDLVHVQGYYQAQPGRMLLPGEWQGAPLLAFFPLLSVTNAQWSNLKQSDKHSAFHVLEKRYQEYVAKVVKPFYKQHFAGFDRQVVLVDCFSALNRGKSQFEDMGAALNAIMESFQYGQSSYLRRLFAPRIDRLLFAASKVDHVTRDQQSHVLSLLTDMLKHSQHFAGFEGCKVETMAISAIKATRHGMVTTQEGDVEVVQGTGLNGQALTLFPGEVPTRLPEPDFWREQGFNFIGFAPPDNTNVDPSSVHFDHIRLDHLLQYLVGDKLE.

The Walker A motif signature appears at 33 to 40; the sequence is GLSGAGKT. GTP contacts are provided by Ser-35, Gly-36, Gly-38, Lys-39, Thr-40, Ala-41, Trp-110, Ser-113, Thr-114, Arg-115, Lys-355, Asp-357, and His-358. Residues Gly-36, Gly-38, Lys-39, Thr-40, Ala-41, Trp-110, Ser-113, and Thr-114 each coordinate GDP. Positions 355, 357, 358, 395, 396, and 397 each coordinate GDP. Position 397 (Ile-397) interacts with GTP.

As to quaternary structure, monomer in solution. The cofactor is Mg(2+).

The catalysed reaction is GTP + H2O = GDP + phosphate + H(+). With respect to regulation, alternates between an inactive form bound to GDP and an active form bound to GTP. Likely activated by a guanine nucleotide-exchange factor (GEF). In terms of biological role, binds GTP and GDP. Has intrinsic GTPase activity. Does not hydrolyze ATP. May act as a transducer of stress responses. The chain is Ras-like GTPase YcjX from Shewanella oneidensis (strain ATCC 700550 / JCM 31522 / CIP 106686 / LMG 19005 / NCIMB 14063 / MR-1).